Reading from the N-terminus, the 365-residue chain is Alanine racemase (365 aa).

The active-site Proton acceptor; specific for D-alanine is lysine 35. Lysine 35 carries the N6-(pyridoxal phosphate)lysine modification. Arginine 130 contacts substrate. Catalysis depends on tyrosine 256, which acts as the Proton acceptor; specific for L-alanine. Methionine 304 contacts substrate.

The protein belongs to the alanine racemase family. Pyridoxal 5'-phosphate is required as a cofactor.

It catalyses the reaction L-alanine = D-alanine. The protein operates within amino-acid biosynthesis; D-alanine biosynthesis; D-alanine from L-alanine: step 1/1. Catalyzes the interconversion of L-alanine and D-alanine. May also act on other amino acids. This chain is Alanine racemase (alr), found in Acidovorax ebreus (strain TPSY) (Diaphorobacter sp. (strain TPSY)).